The primary structure comprises 284 residues: tRNA uridine(34) hydroxylase (284 aa).

The region spanning 132–226 is the Rhodanese domain; sequence TGRPVVMLDT…YFEEVGGAHY (95 aa). Cys186 serves as the catalytic Cysteine persulfide intermediate.

This sequence belongs to the TrhO family.

It catalyses the reaction uridine(34) in tRNA + AH2 + O2 = 5-hydroxyuridine(34) in tRNA + A + H2O. Functionally, catalyzes oxygen-dependent 5-hydroxyuridine (ho5U) modification at position 34 in tRNAs. The sequence is that of tRNA uridine(34) hydroxylase from Burkholderia cenocepacia (strain ATCC BAA-245 / DSM 16553 / LMG 16656 / NCTC 13227 / J2315 / CF5610) (Burkholderia cepacia (strain J2315)).